A 606-amino-acid polypeptide reads, in one-letter code: MNMFSSCMITALVILTLPIIMSSTKLYKNKLYPYYVKTATSYAFMISMIPTMMFIYSGQETIISNWHWMTIQTMKLSMSFKLDYFSMIFVPVALFVTWSIMEFSMWYMHSDPYINRFFKYLLLFLITMMVLVTANNMFQLFIGWEGVGIMSFLLIGWWYGRTDANTAALQAVLYNRIGDVGFIMTMAWFLLNLNTWDLQQIFITTNDNFNLPLLGLLLAATGKSAQFGLHPWLPSAMEGPTPVSALLHSSTMVVAGVFLLIRFHPLMEHNQTIQTLTLCLGAITTLFTAICALTQNDIKKIVAFSTSSQLGLMMVTIGINQPYLAFLHICTHAFFKAMLFMCSGSIIHSLNDEQDIRKMGGLFKVLPFTTTSLIIGSLALTGMPFLTGFYSKDLIIESANTSNTNAWALLITLVATSLTAAYSTRIMFFALLGQPRFSPMILINENNPLLINSIKRLLIGSVFAGYIISHSITPTTIPQMTMPHYLKMTALAVTILGFILALELNLTTQGLKFNYPSNYFKFSSLLGYYPTIMHRLTPKTSLTISQKSASMLLDSIWLENILPKSISYFQMKSSTLISNQKGLIKLYFLSFMLTMILSLLILNYHG.

The next 14 helical transmembrane spans lie at 1–21, 43–63, 87–107, 117–137, 140–160, 171–191, 241–261, 273–293, 310–330, 365–385, 409–429, 457–477, 488–508, and 582–602; these read MNMF…PIIM, AFMI…ETII, MIFV…SMWY, FFKY…ANNM, LFIG…WWYG, AVLY…WFLL, TPVS…FLLI, IQTL…ICAL, LGLM…LHIC, VLPF…GMPF, LLIT…IMFF, LLIG…PTTI, MTAL…NLTT, and GLIK…LLIL.

It belongs to the complex I subunit 5 family. As to quaternary structure, core subunit of respiratory chain NADH dehydrogenase (Complex I) which is composed of 45 different subunits.

It is found in the mitochondrion inner membrane. It carries out the reaction a ubiquinone + NADH + 5 H(+)(in) = a ubiquinol + NAD(+) + 4 H(+)(out). Core subunit of the mitochondrial membrane respiratory chain NADH dehydrogenase (Complex I) which catalyzes electron transfer from NADH through the respiratory chain, using ubiquinone as an electron acceptor. Essential for the catalytic activity and assembly of complex I. This Canis lupus (Gray wolf) protein is NADH-ubiquinone oxidoreductase chain 5 (MT-ND5).